The chain runs to 113 residues: Protein NATD1 (113 aa).

The N-acetyltransferase domain occupies 22-112 (EHDRRRRQFT…PLPQYLERLQ (91 aa)).

The protein belongs to the NATD1 family.

This is Protein NATD1 (NATD1) from Homo sapiens (Human).